A 202-amino-acid polypeptide reads, in one-letter code: Imidazoleglycerol-phosphate dehydratase (202 aa).

It belongs to the imidazoleglycerol-phosphate dehydratase family.

The protein localises to the cytoplasm. The enzyme catalyses D-erythro-1-(imidazol-4-yl)glycerol 3-phosphate = 3-(imidazol-4-yl)-2-oxopropyl phosphate + H2O. It participates in amino-acid biosynthesis; L-histidine biosynthesis; L-histidine from 5-phospho-alpha-D-ribose 1-diphosphate: step 6/9. The protein is Imidazoleglycerol-phosphate dehydratase of Acinetobacter baumannii (strain AYE).